The sequence spans 297 residues: HTH-type transcriptional regulator ArgP (297 aa).

One can recognise an HTH lysR-type domain in the interval Pro4–Thr60. Residues Phe21 to Lys40 constitute a DNA-binding region (H-T-H motif).

This sequence belongs to the LysR transcriptional regulatory family. In terms of assembly, homodimer.

Controls the transcription of genes involved in arginine and lysine metabolism. This is HTH-type transcriptional regulator ArgP from Escherichia coli O7:K1 (strain IAI39 / ExPEC).